The sequence spans 504 residues: Anaerobic nitric oxide reductase transcription regulator NorR (504 aa).

Residue D57 is modified to 4-aspartylphosphate. The Sigma-54 factor interaction domain maps to 187-416; that stretch reads MIGLSPGMTQ…LEHAIHRAVV (230 aa). Residues 215-222 and 278-287 contribute to the ATP site; these read GETGTGKE and ADNGTLFLDE. The H-T-H motif DNA-binding region spans 479–498; sequence WAACARMLETDVANLHRLAK.

The protein operates within nitrogen metabolism; nitric oxide reduction. Its function is as follows. Required for the expression of anaerobic nitric oxide (NO) reductase, acts as a transcriptional activator for at least the norVW operon. Activation also requires sigma-54. The sequence is that of Anaerobic nitric oxide reductase transcription regulator NorR from Escherichia coli O8 (strain IAI1).